Here is a 188-residue protein sequence, read N- to C-terminus: Large ribosomal subunit protein bL32m (188 aa).

Zn(2+) is bound by residues cysteine 110, cysteine 113, cysteine 123, and cysteine 126. The tract at residues 164-188 (TPSEQDQGKRIIERDRKRPSWFTQN) is disordered. Positions 169 to 181 (DQGKRIIERDRKR) are enriched in basic and acidic residues.

It belongs to the bacterial ribosomal protein bL32 family. In terms of assembly, component of the mitochondrial large ribosomal subunit (mt-LSU). Mature mammalian 55S mitochondrial ribosomes consist of a small (28S) and a large (39S) subunit. The 28S small subunit contains a 12S ribosomal RNA (12S mt-rRNA) and 30 different proteins. The 39S large subunit contains a 16S rRNA (16S mt-rRNA), a copy of mitochondrial valine transfer RNA (mt-tRNA(Val)), which plays an integral structural role, and 52 different proteins. bL32m has a zinc binding site. In terms of processing, MRPL32 precursor is processed by the m-AAA protease (composed of AFG3L2 and SPG7), which cleaves the N-terminal transit peptide. Cleavage by the m-AAA protease takes place prior to assembly into the large subunit, an essential step for mitochondrial ribosome (mitoribosome) assembly. Proper processing by the m-AAA protease is dependent on the zinc-binding region within the tightly folded C-terminal domain of MRPL32: zinc-dependent folding halts degradation initiated from the N-terminus and triggers the release of mature MRPL32.

The protein localises to the mitochondrion. In terms of biological role, component of the mitochondrial large ribosomal subunit (mt-LSU). The mitochondrial ribosome (mitoribosome) is a large ribonucleoprotein complex responsible for the synthesis of proteins inside mitochondria. This Homo sapiens (Human) protein is Large ribosomal subunit protein bL32m (MRPL32).